The sequence spans 94 residues: Large ribosomal subunit protein eL36 (94 aa).

Positions 1–25 are enriched in basic residues; it reads MKNAYKKVRVRYPVKRPDVKRKQRG. Positions 1–30 are disordered; the sequence is MKNAYKKVRVRYPVKRPDVKRKQRGPRAET.

This sequence belongs to the eukaryotic ribosomal protein eL36 family. In terms of assembly, component of the large ribosomal subunit.

The protein localises to the cytoplasm. The protein is Large ribosomal subunit protein eL36 (RPL36) of Encephalitozoon cuniculi (strain GB-M1) (Microsporidian parasite).